Here is an 861-residue protein sequence, read N- to C-terminus: Seed linoleate 9S-lipoxygenase-3 (861 aa).

In terms of domain architecture, PLAT spans Q41–A166. The Lipoxygenase domain occupies T169–I861. The disordered stretch occupies residues N215–D257. A compositionally biased stretch (basic residues) spans R237–T246. The span at R247 to D257 shows a compositional bias: basic and acidic residues. 5 residues coordinate Fe cation: H522, H527, H713, N717, and I861.

It belongs to the lipoxygenase family. Fe cation is required as a cofactor.

It localises to the cytoplasm. It catalyses the reaction (9Z,12Z)-octadecadienoate + O2 = (9S)-hydroperoxy-(10E,12Z)-octadecadienoate. It functions in the pathway lipid metabolism; oxylipin biosynthesis. Functionally, plant lipoxygenase may be involved in a number of diverse aspects of plant physiology including growth and development, pest resistance, and senescence or responses to wounding. It catalyzes the hydroperoxidation of lipids containing a cis,cis-1,4-pentadiene structure. The polypeptide is Seed linoleate 9S-lipoxygenase-3 (LOX1.3) (Pisum sativum (Garden pea)).